We begin with the raw amino-acid sequence, 216 residues long: 3-isopropylmalate dehydratase small subunit (216 aa).

This sequence belongs to the LeuD family. LeuD type 1 subfamily. As to quaternary structure, heterodimer of LeuC and LeuD.

The catalysed reaction is (2R,3S)-3-isopropylmalate = (2S)-2-isopropylmalate. It functions in the pathway amino-acid biosynthesis; L-leucine biosynthesis; L-leucine from 3-methyl-2-oxobutanoate: step 2/4. Catalyzes the isomerization between 2-isopropylmalate and 3-isopropylmalate, via the formation of 2-isopropylmaleate. This Methylibium petroleiphilum (strain ATCC BAA-1232 / LMG 22953 / PM1) protein is 3-isopropylmalate dehydratase small subunit.